The chain runs to 107 residues: U20-lycotoxin-Ls1b (107 aa).

The N-terminal stretch at 1-30 (MFSTSDQVSKMNSRILSALLILGIATCVIA) is a signal peptide. A WAP domain is found at 31 to 76 (GGFCPKSRHPQCNLSYKINDCCAQSDCRVGSVCCVEGCGNVCRAES). 5 disulfide bridges follow: Cys-34–Cys-64, Cys-42–Cys-68, Cys-51–Cys-63, Cys-52–Cys-90, and Cys-57–Cys-72.

It belongs to the venom protein 11 family. 02 (wap-2) subfamily. In terms of processing, contains 5 disulfide bonds. Expressed by the venom gland.

The protein localises to the secreted. Its function is as follows. Has antibacterial activity. The polypeptide is U20-lycotoxin-Ls1b (Lycosa singoriensis (Wolf spider)).